The following is a 213-amino-acid chain: Octanoyltransferase (213 aa).

The 176-residue stretch at 32–207 (ENSHDEIWLV…NILALLNNPP (176 aa)) folds into the BPL/LPL catalytic domain. Substrate is bound by residues 71 to 78 (RGGQVTYH), 138 to 140 (SLG), and 151 to 153 (GLA). Cysteine 169 acts as the Acyl-thioester intermediate in catalysis.

It belongs to the LipB family.

It is found in the cytoplasm. It catalyses the reaction octanoyl-[ACP] + L-lysyl-[protein] = N(6)-octanoyl-L-lysyl-[protein] + holo-[ACP] + H(+). It functions in the pathway protein modification; protein lipoylation via endogenous pathway; protein N(6)-(lipoyl)lysine from octanoyl-[acyl-carrier-protein]: step 1/2. Its function is as follows. Catalyzes the transfer of endogenously produced octanoic acid from octanoyl-acyl-carrier-protein onto the lipoyl domains of lipoate-dependent enzymes. Lipoyl-ACP can also act as a substrate although octanoyl-ACP is likely to be the physiological substrate. In Salmonella typhi, this protein is Octanoyltransferase.